The sequence spans 353 residues: Vomeronasal type-1 receptor 1 (353 aa).

At 1–56 (MVGDTLKLLSPLMTRYFFLLFYSTDSSDLNENQHPLDFDEMAFGKVKSGISFLIQT) the chain is on the extracellular side. Residues 57–77 (GVGILGNSFLLCFYNLILFTG) traverse the membrane as a helical segment. The Cytoplasmic segment spans residues 78–84 (HKLRPTD). A helical transmembrane segment spans residues 85–105 (LILSQLALANSMVLFFKGIPQ). Residues 106–132 (TMAAFGLKYLLNDTGCKFVFYYHRVGT) are Extracellular-facing. N117 carries an N-linked (GlcNAc...) asparagine glycan. Residues 133–153 (RVSLSTICLLNGFQAIKLNPS) traverse the membrane as a helical segment. Over 154 to 169 (ICRWMEIKIRSPRFID) the chain is Cytoplasmic. A helical membrane pass occupies residues 170–190 (FCCLLCWAPHVLMNASVLLLV). Residues 191–226 (NGPLNSKNSSAKNNYGYCSYKASKRFSSLHAVLYFS) lie on the Extracellular side of the membrane. N198 is a glycosylation site (N-linked (GlcNAc...) asparagine). Residues 227–247 (PDFMSLGFMVWASGSMVFFLY) traverse the membrane as a helical segment. At 248–274 (RHKQQVQHNHSNRLSCRPSQEARATHT) the chain is on the cytoplasmic side. The helical transmembrane segment at 275–295 (IMVLVSSFFVFYSVHSFLTIW) threads the bilayer. Residues 296–303 (TTVVANPG) are Extracellular-facing. The chain crosses the membrane as a helical span at residues 304–324 (QWIVTNSVLVASCFPARSPFV). At 325–353 (LIMSDTHISQFCFACRTRKTLFPNLVVMP) the chain is on the cytoplasmic side.

Belongs to the G-protein coupled receptor 1 family. Expressed in the olfactory mucosa, very low expression in brain, lung and kidney.

It is found in the cell membrane. Its function is as follows. Putative pheromone receptor. The sequence is that of Vomeronasal type-1 receptor 1 (VN1R1) from Homo sapiens (Human).